We begin with the raw amino-acid sequence, 199 residues long: ATP-dependent Clp protease proteolytic subunit 3 (199 aa).

Residue S101 is the Nucleophile of the active site. The active site involves H126.

Belongs to the peptidase S14 family. As to quaternary structure, fourteen ClpP subunits assemble into 2 heptameric rings which stack back to back to give a disk-like structure with a central cavity, resembling the structure of eukaryotic proteasomes.

It localises to the cytoplasm. The catalysed reaction is Hydrolysis of proteins to small peptides in the presence of ATP and magnesium. alpha-casein is the usual test substrate. In the absence of ATP, only oligopeptides shorter than five residues are hydrolyzed (such as succinyl-Leu-Tyr-|-NHMec, and Leu-Tyr-Leu-|-Tyr-Trp, in which cleavage of the -Tyr-|-Leu- and -Tyr-|-Trp bonds also occurs).. Its function is as follows. Cleaves peptides in various proteins in a process that requires ATP hydrolysis. Has a chymotrypsin-like activity. Plays a major role in the degradation of misfolded proteins. This is ATP-dependent Clp protease proteolytic subunit 3 from Synechococcus elongatus (strain ATCC 33912 / PCC 7942 / FACHB-805) (Anacystis nidulans R2).